A 107-amino-acid polypeptide reads, in one-letter code: Nucleoid-associated protein RF_1365 (107 aa).

The protein belongs to the YbaB/EbfC family. Homodimer.

It is found in the cytoplasm. It localises to the nucleoid. Binds to DNA and alters its conformation. May be involved in regulation of gene expression, nucleoid organization and DNA protection. This chain is Nucleoid-associated protein RF_1365, found in Rickettsia felis (strain ATCC VR-1525 / URRWXCal2) (Rickettsia azadi).